We begin with the raw amino-acid sequence, 176 residues long: Crossover junction endodeoxyribonuclease RuvC (176 aa).

Residues aspartate 8, glutamate 69, and aspartate 141 contribute to the active site. Residues aspartate 8, glutamate 69, and aspartate 141 each contribute to the Mg(2+) site.

Belongs to the RuvC family. As to quaternary structure, homodimer which binds Holliday junction (HJ) DNA. The HJ becomes 2-fold symmetrical on binding to RuvC with unstacked arms; it has a different conformation from HJ DNA in complex with RuvA. In the full resolvosome a probable DNA-RuvA(4)-RuvB(12)-RuvC(2) complex forms which resolves the HJ. Mg(2+) serves as cofactor.

Its subcellular location is the cytoplasm. The catalysed reaction is Endonucleolytic cleavage at a junction such as a reciprocal single-stranded crossover between two homologous DNA duplexes (Holliday junction).. In terms of biological role, the RuvA-RuvB-RuvC complex processes Holliday junction (HJ) DNA during genetic recombination and DNA repair. Endonuclease that resolves HJ intermediates. Cleaves cruciform DNA by making single-stranded nicks across the HJ at symmetrical positions within the homologous arms, yielding a 5'-phosphate and a 3'-hydroxyl group; requires a central core of homology in the junction. The consensus cleavage sequence is 5'-(A/T)TT(C/G)-3'. Cleavage occurs on the 3'-side of the TT dinucleotide at the point of strand exchange. HJ branch migration catalyzed by RuvA-RuvB allows RuvC to scan DNA until it finds its consensus sequence, where it cleaves and resolves the cruciform DNA. This Pseudomonas syringae pv. tomato (strain ATCC BAA-871 / DC3000) protein is Crossover junction endodeoxyribonuclease RuvC.